We begin with the raw amino-acid sequence, 810 residues long: Volume-regulated anion channel subunit LRRC8A (810 aa).

The residue at position 1 (Met1) is an N-acetylmethionine. The Cytoplasmic segment spans residues Met1–Pro22. A helical transmembrane segment spans residues Trp23–Val47. Over Thr48–Lys123 the chain is Extracellular. 3 cysteine pairs are disulfide-bonded: Cys54/Cys310, Cys57/Cys65, and Cys113/Cys295. Residues Asn66 and Asn83 are each glycosylated (N-linked (GlcNAc...) asparagine). A helical transmembrane segment spans residues Tyr124–Phe142. Residues Trp143 to Tyr264 are Cytoplasmic-facing. Thr200 carries the post-translational modification Phosphothreonine. Phosphoserine is present on Ser202. Thr215 carries the post-translational modification Phosphothreonine. Ser217 is modified (phosphoserine). A helical transmembrane segment spans residues Met265–Val286. Over His287 to Thr316 the chain is Extracellular. The chain crosses the membrane as a helical span at residues Leu317 to Trp341. Over Trp342 to Ala810 the chain is Cytoplasmic. 17 LRR repeats span residues Trp411–Lys422, Asn423–Leu445, Glu447–Leu468, Thr469–Arg492, Glu493–Leu515, Leu518–Glu542, Leu543–Val565, Val567–Lys589, Met590–Leu613, His614–His637, His639–Leu661, Thr662–Cys684, Lys686–Leu707, Gln708–Cys730, Lys732–Leu753, Thr754–Cys776, and Leu778–Arg801. Positions Leu706–Leu707 match the Di-leucine motif motif.

Belongs to the LRRC8 family. Heterohexamer; oligomerizes with other LRRC8 proteins (LRRC8B, LRRC8C, LRRC8D and/or LRRC8E) to form a heterohexamer. Can form homohexamers in vitro, but these have lower conductance than heterohexamers. In vivo, the subunit composition may depend primarily on expression levels, and heterooligomeric channels containing various proportions of the different LRRC8 proteins may coexist. Interact with GRB2. Interacts with NOX4; this interaction prevents the ubiquitin-mediated degradation of LRRC8A. In terms of processing, N-glycosylated. Ubiquitously expressed. High levels detected in the bone marrow; lower levels found in peripheral blood cells. Highly expressed in pancreatic beta cells.

Its subcellular location is the cell membrane. It localises to the lysosome membrane. The catalysed reaction is chloride(in) = chloride(out). It carries out the reaction iodide(out) = iodide(in). It catalyses the reaction taurine(out) = taurine(in). The enzyme catalyses L-aspartate(out) = L-aspartate(in). The catalysed reaction is L-glutamate(out) = L-glutamate(in). It carries out the reaction myo-inositol(out) = myo-inositol(in). It catalyses the reaction 2',3'-cGAMP(out) = 2',3'-cGAMP(in). With respect to regulation, inhibited by (4-[(2-butyl-6,7-dichloro-2-cyclopentyl-2,3-dihydro-1-oxo-1H-inden-5-yl)oxy]butanoic acid), which plugs the channel like a cork in a bottle by binding in the extracellular selectivity filter and sterically occluding ion conduction. Lipids may block conduction in closed heterohexameric channels. In terms of biological role, essential component of the volume-regulated anion channel (VRAC, also named VSOAC channel), an anion channel required to maintain a constant cell volume in response to extracellular or intracellular osmotic changes. The VRAC channel conducts iodide better than chloride and can also conduct organic osmolytes like taurine. Mediates efflux of amino acids, such as aspartate and glutamate, in response to osmotic stress. In complex with LRRC8C or LRRC8E, acts as a transporter of immunoreactive cyclic dinucleotide GMP-AMP (2'-3'-cGAMP), an immune messenger produced in response to DNA virus in the cytosol: mediates both import and export of 2'-3'-cGAMP, thereby promoting transfer of 2'-3'-cGAMP to bystander cells. In contrast, complexes containing LRRC8D inhibit transport of 2'-3'-cGAMP. Required for in vivo channel activity, together with at least one other family member (LRRC8B, LRRC8C, LRRC8D or LRRC8E); channel characteristics depend on the precise subunit composition. Can form functional channels by itself (in vitro). Involved in B-cell development: required for the pro-B cell to pre-B cell transition. Also required for T-cell development. Required for myoblast differentiation: VRAC activity promotes membrane hyperpolarization and regulates insulin-stimulated glucose metabolism and oxygen consumption. Also acts as a regulator of glucose-sensing in pancreatic beta cells: VRAC currents, generated in response to hypotonicity- or glucose-induced beta cell swelling, depolarize cells, thereby causing electrical excitation, leading to increase glucose sensitivity and insulin secretion. Also plays a role in lysosome homeostasis by forming functional lysosomal VRAC channels in response to low cytoplasmic ionic strength condition: lysosomal VRAC channels are necessary for the formation of large lysosome-derived vacuoles, which store and then expel excess water to maintain cytosolic water homeostasis. Acts as a key factor in NLRP3 inflammasome activation by modulating itaconate efflux and mitochondria function. In Mus musculus (Mouse), this protein is Volume-regulated anion channel subunit LRRC8A.